Reading from the N-terminus, the 312-residue chain is Small ribosomal subunit protein RACK1 (312 aa).

7 WD repeats span residues 9 to 42 (GHRG…ISWK), 63 to 93 (GHTG…RMWD), 105 to 135 (KHTK…RVWN), 148 to 180 (GHED…KVWN), 192 to 222 (GHSN…LLWD), 233 to 262 (NVES…SVYD), and 279 to 307 (PSEC…RVWS).

It belongs to the WD repeat G protein beta family. Ribosomal protein RACK1 subfamily.

This Leishmania major protein is Small ribosomal subunit protein RACK1.